Reading from the N-terminus, the 585-residue chain is Aspartate--tRNA ligase (585 aa).

An L-aspartate-binding site is contributed by Glu-173. Residues 197–200 are aspartate; it reads QTLK. An L-aspartate-binding site is contributed by Arg-219. ATP is bound by residues 219 to 221 and Gln-228; that span reads RDE. Residue His-446 coordinates L-aspartate. Glu-480 contacts ATP. An L-aspartate-binding site is contributed by Arg-487. 532–535 lines the ATP pocket; it reads GLDR.

The protein belongs to the class-II aminoacyl-tRNA synthetase family. Type 1 subfamily. Homodimer.

The protein localises to the cytoplasm. It carries out the reaction tRNA(Asp) + L-aspartate + ATP = L-aspartyl-tRNA(Asp) + AMP + diphosphate. Functionally, catalyzes the attachment of L-aspartate to tRNA(Asp) in a two-step reaction: L-aspartate is first activated by ATP to form Asp-AMP and then transferred to the acceptor end of tRNA(Asp). The polypeptide is Aspartate--tRNA ligase (Parabacteroides distasonis (strain ATCC 8503 / DSM 20701 / CIP 104284 / JCM 5825 / NCTC 11152)).